We begin with the raw amino-acid sequence, 462 residues long: GTPase Der (462 aa).

EngA-type G domains follow at residues glutamine 2–valine 164 and isoleucine 198–threonine 369. Residues glycine 8–serine 15, aspartate 55–leucine 59, asparagine 116–aspartate 119, glycine 204–serine 211, aspartate 251–isoleucine 255, and asparagine 315–aspartate 318 contribute to the GTP site. In terms of domain architecture, KH-like spans glutamine 370–glycine 454.

Belongs to the TRAFAC class TrmE-Era-EngA-EngB-Septin-like GTPase superfamily. EngA (Der) GTPase family. In terms of assembly, associates with the 50S ribosomal subunit.

Its function is as follows. GTPase that plays an essential role in the late steps of ribosome biogenesis. This is GTPase Der from Campylobacter concisus (strain 13826).